The chain runs to 336 residues: Geranylgeranyl pyrophosphate synthase 6, mitochondrial (336 aa).

A mitochondrion-targeting transit peptide spans 1 to 22 (MRPRYSLILSAMRLIRPSNRRL). Isopentenyl diphosphate contacts are provided by lysine 80, arginine 83, and histidine 112. The Mg(2+) site is built by aspartate 119 and aspartate 125. Arginine 130 provides a ligand contact to dimethylallyl diphosphate. An isopentenyl diphosphate-binding site is contributed by arginine 131. Dimethylallyl diphosphate is bound by residues lysine 221, threonine 222, glutamine 259, lysine 276, and lysine 286.

The protein belongs to the FPP/GGPP synthase family. Monomer. It depends on Mg(2+) as a cofactor.

It is found in the mitochondrion. The catalysed reaction is isopentenyl diphosphate + dimethylallyl diphosphate = (2E)-geranyl diphosphate + diphosphate. The enzyme catalyses isopentenyl diphosphate + (2E)-geranyl diphosphate = (2E,6E)-farnesyl diphosphate + diphosphate. It catalyses the reaction isopentenyl diphosphate + (2E,6E)-farnesyl diphosphate = (2E,6E,10E)-geranylgeranyl diphosphate + diphosphate. It participates in isoprenoid biosynthesis; farnesyl diphosphate biosynthesis; farnesyl diphosphate from geranyl diphosphate and isopentenyl diphosphate: step 1/1. The protein operates within isoprenoid biosynthesis; geranyl diphosphate biosynthesis; geranyl diphosphate from dimethylallyl diphosphate and isopentenyl diphosphate: step 1/1. It functions in the pathway isoprenoid biosynthesis; geranylgeranyl diphosphate biosynthesis; geranylgeranyl diphosphate from farnesyl diphosphate and isopentenyl diphosphate: step 1/1. Catalyzes the trans-addition of the three molecules of IPP onto DMAPP to form geranylgeranyl pyrophosphate. The chain is Geranylgeranyl pyrophosphate synthase 6, mitochondrial from Arabidopsis thaliana (Mouse-ear cress).